Here is a 966-residue protein sequence, read N- to C-terminus: Integrator complex subunit 7 (966 aa).

2 positions are modified to phosphoserine: Ser-338 and Ser-809. The segment at 941–966 is disordered; it reads LQQQAQQPLQPQPLPQPQPRSAYTRF.

It belongs to the Integrator subunit 7 family. As to quaternary structure, component of the Integrator complex, composed of core subunits INTS1, INTS2, INTS3, INTS4, INTS5, INTS6, INTS7, INTS8, INTS9/RC74, INTS10, INTS11/CPSF3L, INTS12, INTS13, INTS14 and INTS15. The core complex associates with protein phosphatase 2A subunits PPP2CA and PPP2R1A, to form the Integrator-PP2A (INTAC) complex. Interacts with NABP2.

The protein localises to the nucleus. It is found in the chromosome. Its subcellular location is the cytoplasm. Its function is as follows. Component of the integrator complex, a multiprotein complex that terminates RNA polymerase II (Pol II) transcription in the promoter-proximal region of genes. The integrator complex provides a quality checkpoint during transcription elongation by driving premature transcription termination of transcripts that are unfavorably configured for transcriptional elongation: the complex terminates transcription by (1) catalyzing dephosphorylation of the C-terminal domain (CTD) of Pol II subunit POLR2A/RPB1 and SUPT5H/SPT5, (2) degrading the exiting nascent RNA transcript via endonuclease activity and (3) promoting the release of Pol II from bound DNA. The integrator complex is also involved in terminating the synthesis of non-coding Pol II transcripts, such as enhancer RNAs (eRNAs), small nuclear RNAs (snRNAs), telomerase RNAs and long non-coding RNAs (lncRNAs). May be not involved in the recruitment of cytoplasmic dynein to the nuclear envelope by different components of the INT complex. Plays a role in DNA damage response (DDR) signaling during the S phase. This Mus musculus (Mouse) protein is Integrator complex subunit 7 (Ints7).